The sequence spans 578 residues: 65-kDa microtubule-associated protein 2 (578 aa).

Coiled coils occupy residues 64–84 (AELL…TTAL), 151–184 (DETD…VLEF), 235–257 (TLKE…LTDL), 290–312 (ALAL…LKSS), and 461–489 (AMLD…QQEQ). Over residues 473 to 494 (REDEKRRLKEQKKQQEQPHTDQ) the composition is skewed to basic and acidic residues. The disordered stretch occupies residues 473 to 578 (REDEKRRLKE…SRADPVMASP (106 aa)). A phosphoserine mark is found at S503 and S532. A compositionally biased stretch (polar residues) spans 549–558 (KIASPSNIVA). A phosphoserine mark is found at S566, S569, and S577.

This sequence belongs to the MAP65/ASE1 family. Forms a dimer. Binds to microtubules (MT). Bundles polymerized MT via the formation of 25-nm crossbridges with centrally located endocytic MT.

The protein resides in the nucleus. It localises to the cytoplasm. It is found in the cytoskeleton. The protein localises to the spindle pole. Its subcellular location is the phragmoplast. Its function is as follows. Microtubule-associated protein that stabilize microtubules (MT). Involved in the regulation of MT organization and dynamics. Confers MT resistance to the drug propyzamide and cold conditions. This is 65-kDa microtubule-associated protein 2 (MAP65-2) from Arabidopsis thaliana (Mouse-ear cress).